The chain runs to 126 residues: Small ribosomal subunit protein uS11 (126 aa).

The protein belongs to the universal ribosomal protein uS11 family. As to quaternary structure, part of the 30S ribosomal subunit.

Functionally, located on the platform of the 30S subunit. The polypeptide is Small ribosomal subunit protein uS11 (Methanosarcina mazei (strain ATCC BAA-159 / DSM 3647 / Goe1 / Go1 / JCM 11833 / OCM 88) (Methanosarcina frisia)).